Reading from the N-terminus, the 292-residue chain is GTP cyclohydrolase FolE2 (292 aa).

The protein belongs to the GTP cyclohydrolase IV family.

The catalysed reaction is GTP + H2O = 7,8-dihydroneopterin 3'-triphosphate + formate + H(+). It participates in cofactor biosynthesis; 7,8-dihydroneopterin triphosphate biosynthesis; 7,8-dihydroneopterin triphosphate from GTP: step 1/1. Its function is as follows. Converts GTP to 7,8-dihydroneopterin triphosphate. The protein is GTP cyclohydrolase FolE2 of Staphylococcus aureus (strain MRSA252).